A 620-amino-acid chain; its full sequence is Glutathione-regulated potassium-efflux system protein KefC (620 aa).

The next 12 helical transmembrane spans lie at H4–V24, L26–L46, S54–L74, G90–L110, V114–M134, F149–L169, L178–L198, V218–G238, G270–V290, L294–V314, W327–Q347, and A359–T379. The RCK N-terminal domain occupies Q399 to T518. The tract at residues Q599 to I620 is disordered.

This sequence belongs to the monovalent cation:proton antiporter 2 (CPA2) transporter (TC 2.A.37) family. KefC subfamily. Homodimer. Interacts with the regulatory subunit KefF.

It is found in the cell inner membrane. Its function is as follows. Pore-forming subunit of a potassium efflux system that confers protection against electrophiles. Catalyzes K(+)/H(+) antiport. This Salmonella dublin (strain CT_02021853) protein is Glutathione-regulated potassium-efflux system protein KefC.